Here is a 197-residue protein sequence, read N- to C-terminus: Large ribosomal subunit protein bL25 (197 aa).

The protein belongs to the bacterial ribosomal protein bL25 family. CTC subfamily. Part of the 50S ribosomal subunit; part of the 5S rRNA/L5/L18/L25 subcomplex. Contacts the 5S rRNA. Binds to the 5S rRNA independently of L5 and L18.

This is one of the proteins that binds to the 5S RNA in the ribosome where it forms part of the central protuberance. In Pseudomonas putida (strain GB-1), this protein is Large ribosomal subunit protein bL25.